The chain runs to 397 residues: (S)-8-oxocitronellyl enol synthase ISY2 (397 aa).

NADP(+) is bound by residues 36 to 38 (TGL), 64 to 65 (RR), 82 to 83 (DV), 106 to 107 (TW), Gln144, Tyr180, Ile207, and 214 to 216 (SMM). Tyr180 is an active-site residue.

Belongs to the short-chain dehydrogenases/reductases (SDR) family.

The enzyme catalyses (S)-8-oxocitronellyl enol + NADP(+) = (6E)-8-oxogeranial + NADPH + H(+). The catalysed reaction is (S)-8-oxocitronellyl enol + NAD(+) = (6E)-8-oxogeranial + NADH + H(+). Functionally, iridoid synthase that catalyzes the first step in generation of the iridoid ring scaffold using the linear monoterpene (6E)-8-oxogeranial as substrate. Iridoids comprise a large family of distinctive bicyclic monoterpenes that possess a wide range of pharmacological activities, including anticancer, anti-inflammatory, antifungal and antibacterial activities. Catalyzes the conversion of the linear monoterpene (6E)-8-oxogeranial to (S)-8-oxocitronellyl enol, a precursor of nepetalactones, which are metabolites that are both insect-repellent and have euphoric effect in cats. The protein is (S)-8-oxocitronellyl enol synthase ISY2 of Nepeta cataria (Catnip).